The following is a 600-amino-acid chain: Alpha-N-acetylgalactosaminide alpha-2,6-sialyltransferase 1 (600 aa).

Residues 1–14 (MRSCLWRCRHLSQG) are Cytoplasmic-facing. Residues 15–35 (VQWSLLLAVLVFFLFALPSFI) traverse the membrane as a helical; Signal-anchor for type II membrane protein segment. Over 36–600 (KEPQTKPSRH…PGPGTAKAKN (565 aa)) the chain is Lumenal. Disordered regions lie at residues 38-191 (PQTK…AATT) and 208-248 (GAVS…TQRN). The span at 46–55 (QRTENIKERS) shows a compositional bias: basic and acidic residues. Polar residues-rich tracts occupy residues 84–94 (NALNTQTQPKA), 151–179 (TEAQSWKSQDTKTTQGNGGQTRKLTASRT), and 209–219 (AVSTRTRQKGV). 2 disulfides stabilise this stretch: cysteine 279–cysteine 362 and cysteine 365–cysteine 533. N-linked (GlcNAc...) asparagine glycans are attached at residues asparagine 300, asparagine 311, asparagine 331, asparagine 375, and asparagine 460.

Belongs to the glycosyltransferase 29 family. In terms of processing, glycosylated; autosialylated. As to expression, expression is restricted to the gastrointestinal tract. Highly expressed in goblet cells. Also expressed in various tumor cells.

The protein resides in the golgi apparatus membrane. The enzyme catalyses a beta-D-galactosyl-(1-&gt;3)-N-acetyl-alpha-D-galactosaminyl derivative + CMP-N-acetyl-beta-neuraminate = a beta-D-galactosyl-(1-&gt;3)-[N-acetyl-alpha-neuraminyl-(2-&gt;6)]-N-acetyl-alpha-D-galactosaminyl derivative + CMP + H(+). The catalysed reaction is a 3-O-[N-acetyl-alpha-D-galactosaminyl]-L-seryl-[protein] + CMP-N-acetyl-beta-neuraminate = a 3-O-[N-acetyl-alpha-neuraminosyl-(2-&gt;6)-N-acetyl-alpha-D-galactosaminyl]-L-seryl-[protein] + CMP + H(+). It carries out the reaction a 3-O-[N-acetyl-alpha-D-galactosaminyl]-L-threonyl-[protein] + CMP-N-acetyl-beta-neuraminate = a 3-O-[N-acetyl-alpha-neuraminosyl-(2-&gt;6)-N-acetyl-alpha-D-galactosaminyl]-L-threonyl-[protein] + CMP + H(+). It catalyses the reaction a 3-O-[beta-D-galactosyl-(1-&gt;3)-N-acetyl-alpha-D-galactosaminyl]-L-seryl-[protein] + CMP-N-acetyl-beta-neuraminate = a 3-O-{beta-D-galactosyl-(1-&gt;3)-[N-acetyl-alpha-neuraminosyl-(2-&gt;6)]-N-acetyl-alpha-D-galactosaminyl}-L-seryl-[protein] + CMP + H(+). The enzyme catalyses a 3-O-[beta-D-galactosyl-(1-&gt;3)-N-acetyl-alpha-D-galactosaminyl]-L-threonyl-[protein] + CMP-N-acetyl-beta-neuraminate = a 3-O-{beta-D-galactosyl-(1-&gt;3)-[N-acetyl-alpha-neuraminosyl-(2-&gt;6)]-N-acetyl-alpha-D-galactosaminyl}-L-threonyl-[protein] + CMP + H(+). The catalysed reaction is a 3-O-[N-acetyl-alpha-neuraminyl-(2-&gt;3)-beta-D-galactosyl-(1-&gt;3)-N-acetyl-alpha-D-galactosaminyl]-L-threonyl-[protein] + CMP-N-acetyl-beta-neuraminate = a 3-O-{alpha-Neu5Ac-(2-&gt;3)-beta-D-Gal-(1-&gt;3)-[alpha-Neu5Ac-(2-&gt;6)]-alpha-D-GalNAc}-L-threonyl-[protein] + CMP + H(+). It functions in the pathway protein modification; protein glycosylation. Functionally, protein sialyltransferase specifically expressed in goblet cells that plays a key role in intestinal host-commensal homeostasis. Conjugates sialic acid with an alpha-2-6 linkage to N-acetylgalactosamine (GalNAc) glycan chains linked to serine or threonine in glycoproteins. Catalyzes the formation of the sialyl-Tn (S-Tn) antigen, an antigen found in intestinal goblet cells, as well as ulcerative colitis (UC) and various cancers. Protein sialylation in globlet cells is essential for mucus integrity and is required to protect the intestinal mucus against excessive bacterial proteolytic degradation. This Homo sapiens (Human) protein is Alpha-N-acetylgalactosaminide alpha-2,6-sialyltransferase 1.